Consider the following 185-residue polypeptide: ATP-dependent protease subunit HslV (185 aa).

Threonine 12 is a catalytic residue. Residues alanine 168, cysteine 171, and threonine 174 each contribute to the Na(+) site.

It belongs to the peptidase T1B family. HslV subfamily. A double ring-shaped homohexamer of HslV is capped on each side by a ring-shaped HslU homohexamer. The assembly of the HslU/HslV complex is dependent on binding of ATP.

The protein resides in the cytoplasm. The enzyme catalyses ATP-dependent cleavage of peptide bonds with broad specificity.. With respect to regulation, allosterically activated by HslU binding. In terms of biological role, protease subunit of a proteasome-like degradation complex believed to be a general protein degrading machinery. In Cereibacter sphaeroides (strain KD131 / KCTC 12085) (Rhodobacter sphaeroides), this protein is ATP-dependent protease subunit HslV.